The chain runs to 117 residues: Prefoldin subunit beta (117 aa).

It belongs to the prefoldin subunit beta family. Heterohexamer of two alpha and four beta subunits.

It localises to the cytoplasm. In terms of biological role, molecular chaperone capable of stabilizing a range of proteins. Seems to fulfill an ATP-independent, HSP70-like function in archaeal de novo protein folding. The protein is Prefoldin subunit beta (pfdB) of Pyrococcus horikoshii (strain ATCC 700860 / DSM 12428 / JCM 9974 / NBRC 100139 / OT-3).